The primary structure comprises 141 residues: Transcription antitermination protein NusB (141 aa).

Belongs to the NusB family.

Its function is as follows. Involved in transcription antitermination. Required for transcription of ribosomal RNA (rRNA) genes. Binds specifically to the boxA antiterminator sequence of the ribosomal RNA (rrn) operons. This is Transcription antitermination protein NusB from Neisseria meningitidis serogroup A / serotype 4A (strain DSM 15465 / Z2491).